Here is a 93-residue protein sequence, read N- to C-terminus: UPF0358 protein BPUM_1375 (93 aa).

Belongs to the UPF0358 family.

The chain is UPF0358 protein BPUM_1375 from Bacillus pumilus (strain SAFR-032).